Consider the following 426-residue polypeptide: Glutamate-1-semialdehyde 2,1-aminomutase (426 aa).

At lysine 265 the chain carries N6-(pyridoxal phosphate)lysine.

The protein belongs to the class-III pyridoxal-phosphate-dependent aminotransferase family. HemL subfamily. In terms of assembly, homodimer. It depends on pyridoxal 5'-phosphate as a cofactor.

It is found in the cytoplasm. The catalysed reaction is (S)-4-amino-5-oxopentanoate = 5-aminolevulinate. Its pathway is porphyrin-containing compound metabolism; protoporphyrin-IX biosynthesis; 5-aminolevulinate from L-glutamyl-tRNA(Glu): step 2/2. This chain is Glutamate-1-semialdehyde 2,1-aminomutase, found in Salmonella heidelberg (strain SL476).